An 88-amino-acid polypeptide reads, in one-letter code: Apolipoprotein C-I (88 aa).

Positions 1-26 are cleaved as a signal peptide; sequence MRLFLSLPVLVVVLAMVLEGPAPTQA.

Belongs to the apolipoprotein C1 family.

It localises to the secreted. Functionally, inhibitor of lipoprotein binding to the low density lipoprotein (LDL) receptor, LDL receptor-related protein, and very low density lipoprotein (VLDL) receptor. Associates with high density lipoproteins (HDL) and the triacylglycerol-rich lipoproteins in the plasma and makes up about 10% of the protein of the VLDL and 2% of that of HDL. Appears to interfere directly with fatty acid uptake and is also the major plasma inhibitor of cholesteryl ester transfer protein (CETP). Binds free fatty acids and reduces their intracellular esterification. Modulates the interaction of APOE with beta-migrating VLDL and inhibits binding of beta-VLDL to the LDL receptor-related protein. This chain is Apolipoprotein C-I (APOC1), found in Leptonychotes weddellii (Weddell seal).